The primary structure comprises 359 residues: Molybdenum import ATP-binding protein ModC (359 aa).

The ABC transporter domain maps to 1 to 236 (MNTEIKARFR…IDLPAAFADD (236 aa)). Residue 34 to 41 (GHSGSGKT) participates in ATP binding. The Mop domain maps to 294–359 (QSSILNCVSA…AQIKAVALLA (66 aa)).

The protein belongs to the ABC transporter superfamily. Molybdate importer (TC 3.A.1.8) family. In terms of assembly, the complex is composed of two ATP-binding proteins (ModC), two transmembrane proteins (ModB) and a solute-binding protein (ModA).

The protein resides in the cell inner membrane. The catalysed reaction is molybdate(out) + ATP + H2O = molybdate(in) + ADP + phosphate + H(+). In terms of biological role, part of the ABC transporter complex ModABC involved in molybdenum import. Responsible for energy coupling to the transport system. The polypeptide is Molybdenum import ATP-binding protein ModC (Dechloromonas aromatica (strain RCB)).